Consider the following 316-residue polypeptide: Lipoyl synthase (316 aa).

[4Fe-4S] cluster is bound by residues Cys66, Cys71, Cys77, Cys92, Cys96, Cys99, and Ser306. The 218-residue stretch at 78–295 (FNRGTATFMI…NLIAFDLGFK (218 aa)) folds into the Radical SAM core domain.

This sequence belongs to the radical SAM superfamily. Lipoyl synthase family. [4Fe-4S] cluster serves as cofactor.

Its subcellular location is the cytoplasm. The catalysed reaction is [[Fe-S] cluster scaffold protein carrying a second [4Fe-4S](2+) cluster] + N(6)-octanoyl-L-lysyl-[protein] + 2 oxidized [2Fe-2S]-[ferredoxin] + 2 S-adenosyl-L-methionine + 4 H(+) = [[Fe-S] cluster scaffold protein] + N(6)-[(R)-dihydrolipoyl]-L-lysyl-[protein] + 4 Fe(3+) + 2 hydrogen sulfide + 2 5'-deoxyadenosine + 2 L-methionine + 2 reduced [2Fe-2S]-[ferredoxin]. It participates in protein modification; protein lipoylation via endogenous pathway; protein N(6)-(lipoyl)lysine from octanoyl-[acyl-carrier-protein]: step 2/2. Catalyzes the radical-mediated insertion of two sulfur atoms into the C-6 and C-8 positions of the octanoyl moiety bound to the lipoyl domains of lipoate-dependent enzymes, thereby converting the octanoylated domains into lipoylated derivatives. This chain is Lipoyl synthase, found in Wigglesworthia glossinidia brevipalpis.